The sequence spans 577 residues: Heavy metal-associated isoprenylated plant protein 34 (577 aa).

The HMA domain occupies 9–72 (LQTCVLKVNV…KLSKSGKHAE (64 aa)). A metal cation is bound by residues cysteine 20 and cysteine 23. A compositionally biased stretch (gly residues) spans 77–87 (GGGGGGGGGKG). Disordered regions lie at residues 77 to 136 (GGGG…QPMQ) and 150 to 451 (AAHG…GPGG). A compositionally biased stretch (low complexity) spans 97 to 106 (NLNMGGNNKP). Residues 118–129 (KAGGGGGGGQNH) are compositionally biased toward gly residues. Over residues 168-177 (KDQKKSVKFA) the composition is skewed to basic and acidic residues. A compositionally biased stretch (acidic residues) spans 178-213 (DDEDDEFSEDDYDDEDFSEDDYDDDEFDDDEDDDDE). The segment covering 227–244 (HMPPNKMMMPNKMMPQMG) has biased composition (low complexity). Composition is skewed to gly residues over residues 245–254 (GHHGNGGGPK) and 266–281 (FKGG…GGGF). Basic and acidic residues-rich tracts occupy residues 294 to 326 (KNGK…KTDA) and 344 to 358 (NGDE…DGHG). Gly residues-rich tracts occupy residues 379–392 (KKGG…GHGG) and 420–451 (GIGG…GPGG). The residue at position 574 (cysteine 574) is a Cysteine methyl ester. A lipid anchor (S-farnesyl cysteine) is attached at cysteine 574. Residues 575–577 (SIM) constitute a propeptide, removed in mature form.

The protein belongs to the HIPP family.

Heavy-metal-binding protein. The sequence is that of Heavy metal-associated isoprenylated plant protein 34 from Arabidopsis thaliana (Mouse-ear cress).